We begin with the raw amino-acid sequence, 100 residues long: Integration host factor subunit beta (100 aa).

Belongs to the bacterial histone-like protein family. As to quaternary structure, heterodimer of an alpha and a beta chain.

In terms of biological role, this protein is one of the two subunits of integration host factor, a specific DNA-binding protein that functions in genetic recombination as well as in transcriptional and translational control. This is Integration host factor subunit beta from Rhodospirillum rubrum (strain ATCC 11170 / ATH 1.1.1 / DSM 467 / LMG 4362 / NCIMB 8255 / S1).